Here is a 137-residue protein sequence, read N- to C-terminus: Small ribosomal subunit protein uS9c (137 aa).

The protein belongs to the universal ribosomal protein uS9 family.

The protein localises to the plastid. Its subcellular location is the chloroplast. This chain is Small ribosomal subunit protein uS9c (rps9), found in Gracilaria tenuistipitata var. liui (Red alga).